The following is a 103-amino-acid chain: Signal recognition particle 19 kDa protein (103 aa).

The protein belongs to the SRP19 family. Part of the signal recognition particle protein translocation system, which is composed of SRP and FtsY. Archaeal SRP consists of a 7S RNA molecule of 300 nucleotides and two protein subunits: SRP54 and SRP19.

The protein resides in the cytoplasm. In terms of biological role, involved in targeting and insertion of nascent membrane proteins into the cytoplasmic membrane. Binds directly to 7S RNA and mediates binding of the 54 kDa subunit of the SRP. The chain is Signal recognition particle 19 kDa protein from Hyperthermus butylicus (strain DSM 5456 / JCM 9403 / PLM1-5).